The sequence spans 155 residues: Small ribosomal subunit protein uS10m (155 aa).

The protein belongs to the universal ribosomal protein uS10 family. Component of the mitochondrial ribosome small subunit (28S) which comprises a 12S rRNA and about 30 distinct proteins.

It is found in the mitochondrion. In Rattus norvegicus (Rat), this protein is Small ribosomal subunit protein uS10m (Mrps10).